Reading from the N-terminus, the 521-residue chain is Type-1 glutamine synthetase 2 (521 aa).

A GS beta-grasp domain is found at 76–176; it reads NQIKISKSPF…FLMDFIGTNG (101 aa). The region spanning 183 to 521 is the GS catalytic domain; that stretch reads PRSTLKKVIK…WELERYLEII (339 aa).

It belongs to the glutamine synthetase family.

The catalysed reaction is L-glutamate + NH4(+) + ATP = L-glutamine + ADP + phosphate + H(+). The protein is Type-1 glutamine synthetase 2 (glnA2) of Dictyostelium discoideum (Social amoeba).